The sequence spans 404 residues: Keratin, type I cuticular Ha3-I (404 aa).

The tract at residues 1 to 56 (MSYSCGLPNLSCRTSCSSRPCVPPSCHGCTLPGACNIPANVSNCNWFCEGSFNGSE) is head. Residues 56 to 367 (EKETMQFLND…SLLESEDCKL (312 aa)) enclose the IF rod domain. Residues 57–91 (KETMQFLNDRLASYLEKVRQLERDNAELENLIRER) form a coil 1A region. The tract at residues 92 to 102 (SQQQEPLVCAS) is linker 1. Residues 103 to 203 (YQSYFKTIEE…HEQEVNTLRC (101 aa)) form a coil 1B region. Residues 204-219 (QLGGRLNVEVDAAPAV) form a linker 12 region. The segment at 220 to 363 (DLNQVLNETR…NTYRSLLESE (144 aa)) is coil 2. Residues 364-404 (DCKLPSNPCAITNACDKSTGPCISNPCGPRARCGPCNTFGY) are tail.

It belongs to the intermediate filament family.

The polypeptide is Keratin, type I cuticular Ha3-I (Pan troglodytes (Chimpanzee)).